The sequence spans 234 residues: Lipoprotein-releasing system ATP-binding protein LolD (234 aa).

An ABC transporter domain is found at 7–233; sequence LQCINLCKRY…LQHHLTLVGA (227 aa). 43-50 lines the ATP pocket; that stretch reads GSSGSGKS.

Belongs to the ABC transporter superfamily. Lipoprotein translocase (TC 3.A.1.125) family. In terms of assembly, the complex is composed of two ATP-binding proteins (LolD) and two transmembrane proteins (LolC and LolE).

The protein resides in the cell inner membrane. Part of the ABC transporter complex LolCDE involved in the translocation of mature outer membrane-directed lipoproteins, from the inner membrane to the periplasmic chaperone, LolA. Responsible for the formation of the LolA-lipoprotein complex in an ATP-dependent manner. The protein is Lipoprotein-releasing system ATP-binding protein LolD of Yersinia pestis bv. Antiqua (strain Antiqua).